Reading from the N-terminus, the 430-residue chain is S-adenosylmethionine synthase (430 aa).

His14 is an ATP binding site. Asp16 is a binding site for Mg(2+). Glu42 provides a ligand contact to K(+). Residues Glu55 and Gln98 each contribute to the L-methionine site. The segment at 98–108 is flexible loop; it reads QSPDINRGVER. ATP contacts are provided by residues 164-166, 254-255, Asp263, 269-270, Ala286, and Lys290; these read DAK, KF, and RK. An L-methionine-binding site is contributed by Asp263. Lys294 is a binding site for L-methionine.

Belongs to the AdoMet synthase family. As to quaternary structure, homotetramer; dimer of dimers. Mg(2+) serves as cofactor. It depends on K(+) as a cofactor.

The protein resides in the cytoplasm. It catalyses the reaction L-methionine + ATP + H2O = S-adenosyl-L-methionine + phosphate + diphosphate. The protein operates within amino-acid biosynthesis; S-adenosyl-L-methionine biosynthesis; S-adenosyl-L-methionine from L-methionine: step 1/1. Catalyzes the formation of S-adenosylmethionine (AdoMet) from methionine and ATP. The overall synthetic reaction is composed of two sequential steps, AdoMet formation and the subsequent tripolyphosphate hydrolysis which occurs prior to release of AdoMet from the enzyme. The protein is S-adenosylmethionine synthase of Bacteroides thetaiotaomicron (strain ATCC 29148 / DSM 2079 / JCM 5827 / CCUG 10774 / NCTC 10582 / VPI-5482 / E50).